The chain runs to 409 residues: 23S rRNA (uracil(747)-C(5))-methyltransferase (409 aa).

Positions 61, 67, 70, and 137 each coordinate [4Fe-4S] cluster. The S-adenosyl-L-methionine site is built by Gln-251, Tyr-277, Glu-298, and Asp-339. Catalysis depends on Cys-365, which acts as the Nucleophile.

Belongs to the class I-like SAM-binding methyltransferase superfamily. RNA M5U methyltransferase family.

It carries out the reaction uridine(747) in 23S rRNA + S-adenosyl-L-methionine = 5-methyluridine(747) in 23S rRNA + S-adenosyl-L-homocysteine + H(+). In terms of biological role, catalyzes the formation of 5-methyl-uridine at position equivalent to 747 (m5U747) in 23S rRNA. The sequence is that of 23S rRNA (uracil(747)-C(5))-methyltransferase from Pyrococcus furiosus (strain ATCC 43587 / DSM 3638 / JCM 8422 / Vc1).